The sequence spans 435 residues: 5-methylthioadenosine/S-adenosylhomocysteine deaminase (435 aa).

Residues His65 and His67 each coordinate Zn(2+). The substrate site is built by Glu94, Arg150, and His189. A Zn(2+)-binding site is contributed by His216. The substrate site is built by Glu219 and Asp304. Residue Asp304 participates in Zn(2+) binding.

This sequence belongs to the metallo-dependent hydrolases superfamily. MTA/SAH deaminase family. Zn(2+) is required as a cofactor.

The enzyme catalyses S-adenosyl-L-homocysteine + H2O + H(+) = S-inosyl-L-homocysteine + NH4(+). It catalyses the reaction S-methyl-5'-thioadenosine + H2O + H(+) = S-methyl-5'-thioinosine + NH4(+). In terms of biological role, catalyzes the deamination of 5-methylthioadenosine and S-adenosyl-L-homocysteine into 5-methylthioinosine and S-inosyl-L-homocysteine, respectively. Is also able to deaminate adenosine. In Bacillus cereus (strain G9842), this protein is 5-methylthioadenosine/S-adenosylhomocysteine deaminase.